A 517-amino-acid polypeptide reads, in one-letter code: TBC1 domain family member 22A (517 aa).

An N-acetylalanine modification is found at Ala2. Residues 103 to 191 (RNHSQRQGRP…PSTLSSSALS (89 aa)) are disordered. Phosphoserine occurs at positions 132, 145, and 167. Residues 163-174 (QRSQSLPHSATV) show a composition bias toward polar residues. Residues 176–190 (LGGTSDPSTLSSSAL) are compositionally biased toward low complexity. The region spanning 222 to 446 (GIPKPVRPMT…RLWDTYQSEP (225 aa)) is the Rab-GAP TBC domain.

Homodimer. Interacts with ACBD3 and ARFGEF1. Interacts with YWHAB, YWHAE, YWHAG, YWHAH, YWHAQ and YWHAZ.

Its function is as follows. May act as a GTPase-activating protein for Rab family protein(s). This chain is TBC1 domain family member 22A (TBC1D22A), found in Homo sapiens (Human).